The chain runs to 882 residues: Valine--tRNA ligase (882 aa).

Positions 45–55 (PNVTGSLHIGH) match the 'HIGH' region motif. Residues 525–529 (KFSKS) carry the 'KMSKS' region motif. Lys528 is an ATP binding site. The stretch at 812-881 (EGLIDVAKEK…VLKKGIQNLA (70 aa)) forms a coiled coil.

It belongs to the class-I aminoacyl-tRNA synthetase family. ValS type 1 subfamily. Monomer.

The protein resides in the cytoplasm. It catalyses the reaction tRNA(Val) + L-valine + ATP = L-valyl-tRNA(Val) + AMP + diphosphate. In terms of biological role, catalyzes the attachment of valine to tRNA(Val). As ValRS can inadvertently accommodate and process structurally similar amino acids such as threonine, to avoid such errors, it has a 'posttransfer' editing activity that hydrolyzes mischarged Thr-tRNA(Val) in a tRNA-dependent manner. The sequence is that of Valine--tRNA ligase from Leptospira interrogans serogroup Icterohaemorrhagiae serovar copenhageni (strain Fiocruz L1-130).